Here is a 178-residue protein sequence, read N- to C-terminus: uncharacterized protein (178 aa).

The protein belongs to the IIV-6 136R family.

This is an uncharacterized protein from Invertebrate iridescent virus 6 (IIV-6).